Here is a 259-residue protein sequence, read N- to C-terminus: 2-oxoglutaramate amidase (259 aa).

A CN hydrolase domain is found at 3–238 (WTISCLQFDI…EGIVRAEIDL (236 aa)). Glu-42 acts as the Proton acceptor in catalysis. Residue Lys-111 is the Proton donor of the active site. The Nucleophile role is filled by Cys-145.

This sequence belongs to the carbon-nitrogen hydrolase superfamily. NIT1/NIT2 family.

It catalyses the reaction 2-oxoglutaramate + H2O = 2-oxoglutarate + NH4(+). In terms of biological role, involved in the methylthioribose (MTR) recycling pathway. Probably catalyzes the conversion of 2-oxoglutaramate to 2-oxoglutarate. This is 2-oxoglutaramate amidase from Bacillus subtilis (strain 168).